A 332-amino-acid polypeptide reads, in one-letter code: Ferredoxin--NADP reductase (332 aa).

FAD-binding residues include E35, Q43, Y48, V88, F122, D286, and S326.

It belongs to the ferredoxin--NADP reductase type 2 family. In terms of assembly, homodimer. FAD is required as a cofactor.

The catalysed reaction is 2 reduced [2Fe-2S]-[ferredoxin] + NADP(+) + H(+) = 2 oxidized [2Fe-2S]-[ferredoxin] + NADPH. This is Ferredoxin--NADP reductase from Limosilactobacillus reuteri (strain DSM 20016) (Lactobacillus reuteri).